We begin with the raw amino-acid sequence, 516 residues long: Squalene epoxidase 4 (516 aa).

2 helical membrane-spanning segments follow: residues 2 to 22 and 43 to 63; these read TYAWLWTLLAFVLTWMVFHLI and ATDVIIVGAGVAGASLAYALA. FAD contacts are provided by residues 53-54, 73-74, Arg-81, Arg-153, Val-169, Asp-335, and Met-348; these read VA and ER. The helical transmembrane segment at 435–455 threads the bilayer; that stretch reads ILGGMNPHPLTLVLHLVAITL.

This sequence belongs to the squalene monooxygenase family. It depends on FAD as a cofactor. In terms of tissue distribution, expressed mainly in seedlings and inflorescences.

Its subcellular location is the membrane. The catalysed reaction is squalene + reduced [NADPH--hemoprotein reductase] + O2 = (S)-2,3-epoxysqualene + oxidized [NADPH--hemoprotein reductase] + H2O + H(+). It participates in terpene metabolism; lanosterol biosynthesis; lanosterol from farnesyl diphosphate: step 2/3. Catalyzes the stereospecific oxidation of squalene to (S)-2,3-epoxysqualene, and is considered to be a rate-limiting enzyme in steroid biosynthesis. The protein is Squalene epoxidase 4 (SQE4) of Arabidopsis thaliana (Mouse-ear cress).